The primary structure comprises 429 residues: 3-phosphoshikimate 1-carboxyvinyltransferase (429 aa).

Residues K11, S12, and R16 each coordinate 3-phosphoshikimate. K11 lines the phosphoenolpyruvate pocket. G82 and R110 together coordinate phosphoenolpyruvate. S155, Q157, D302, and K329 together coordinate 3-phosphoshikimate. Q157 contacts phosphoenolpyruvate. D302 acts as the Proton acceptor in catalysis. Phosphoenolpyruvate contacts are provided by R333 and R385.

Belongs to the EPSP synthase family. As to quaternary structure, monomer.

It is found in the cytoplasm. The enzyme catalyses 3-phosphoshikimate + phosphoenolpyruvate = 5-O-(1-carboxyvinyl)-3-phosphoshikimate + phosphate. Its pathway is metabolic intermediate biosynthesis; chorismate biosynthesis; chorismate from D-erythrose 4-phosphate and phosphoenolpyruvate: step 6/7. Functionally, catalyzes the transfer of the enolpyruvyl moiety of phosphoenolpyruvate (PEP) to the 5-hydroxyl of shikimate-3-phosphate (S3P) to produce enolpyruvyl shikimate-3-phosphate and inorganic phosphate. In Helicobacter pylori (strain HPAG1), this protein is 3-phosphoshikimate 1-carboxyvinyltransferase.